A 299-amino-acid chain; its full sequence is Small ribosomal subunit protein uS3 (299 aa).

In terms of domain architecture, KH type-2 spans 39-107 (VREYLKAKLK…PVAVNIEEVR (69 aa)). A disordered region spans residues 214–299 (PVIKTDERED…AVAPGDAKGE (86 aa)). Positions 217–248 (KTDEREDDRRNRRGPRSDRPAGDRRPPSRDGA) are enriched in basic and acidic residues. Residues 257–282 (ADAGAAAPTDKPADGAAPAAADGPKA) show a composition bias toward low complexity.

This sequence belongs to the universal ribosomal protein uS3 family. As to quaternary structure, part of the 30S ribosomal subunit. Forms a tight complex with proteins S10 and S14.

Its function is as follows. Binds the lower part of the 30S subunit head. Binds mRNA in the 70S ribosome, positioning it for translation. The chain is Small ribosomal subunit protein uS3 from Methylibium petroleiphilum (strain ATCC BAA-1232 / LMG 22953 / PM1).